Here is a 164-residue protein sequence, read N- to C-terminus: ATP synthase subunit b (164 aa).

The chain crosses the membrane as a helical span at residues 6–26 (GELVGNFILVTGSVIVLLLLI).

The protein belongs to the ATPase B chain family. As to quaternary structure, F-type ATPases have 2 components, F(1) - the catalytic core - and F(0) - the membrane proton channel. F(1) has five subunits: alpha(3), beta(3), gamma(1), delta(1), epsilon(1). F(0) has three main subunits: a(1), b(2) and c(10-14). The alpha and beta chains form an alternating ring which encloses part of the gamma chain. F(1) is attached to F(0) by a central stalk formed by the gamma and epsilon chains, while a peripheral stalk is formed by the delta and b chains.

The protein localises to the cell membrane. Functionally, f(1)F(0) ATP synthase produces ATP from ADP in the presence of a proton or sodium gradient. F-type ATPases consist of two structural domains, F(1) containing the extramembraneous catalytic core and F(0) containing the membrane proton channel, linked together by a central stalk and a peripheral stalk. During catalysis, ATP synthesis in the catalytic domain of F(1) is coupled via a rotary mechanism of the central stalk subunits to proton translocation. Component of the F(0) channel, it forms part of the peripheral stalk, linking F(1) to F(0). The chain is ATP synthase subunit b from Streptococcus pyogenes serotype M3 (strain ATCC BAA-595 / MGAS315).